A 445-amino-acid chain; its full sequence is Na(+)-translocating NADH-quinone reductase subunit A (445 aa).

It belongs to the NqrA family. Composed of six subunits; NqrA, NqrB, NqrC, NqrD, NqrE and NqrF.

The catalysed reaction is a ubiquinone + n Na(+)(in) + NADH + H(+) = a ubiquinol + n Na(+)(out) + NAD(+). NQR complex catalyzes the reduction of ubiquinone-1 to ubiquinol by two successive reactions, coupled with the transport of Na(+) ions from the cytoplasm to the periplasm. NqrA to NqrE are probably involved in the second step, the conversion of ubisemiquinone to ubiquinol. The protein is Na(+)-translocating NADH-quinone reductase subunit A of Teredinibacter turnerae (strain ATCC 39867 / T7901).